A 361-amino-acid chain; its full sequence is Peptide chain release factor 1 (361 aa).

Glutamine 238 bears the N5-methylglutamine mark.

This sequence belongs to the prokaryotic/mitochondrial release factor family. Post-translationally, methylated by PrmC. Methylation increases the termination efficiency of RF1.

It is found in the cytoplasm. Peptide chain release factor 1 directs the termination of translation in response to the peptide chain termination codons UAG and UAA. In Mesomycoplasma hyopneumoniae (strain J / ATCC 25934 / NCTC 10110) (Mycoplasma hyopneumoniae), this protein is Peptide chain release factor 1.